We begin with the raw amino-acid sequence, 366 residues long: Prostaglandin F2-alpha receptor (366 aa).

Residues 1–31 lie on the Extracellular side of the membrane; that stretch reads MSMNSSKQPVSPAAGLIANTTCQTENRLSVF. Residues N4 and N19 are each glycosylated (N-linked (GlcNAc...) asparagine). A helical transmembrane segment spans residues 32–55; sequence FSIIFMTVGILSNSLAIAILMKAY. At 56–69 the chain is on the cytoplasmic side; that stretch reads QRFRQKSKASFLLL. A helical membrane pass occupies residues 70-90; it reads ASGLVITDFFGHLINGGIAVF. Residues 91 to 109 lie on the Extracellular side of the membrane; it reads VYASDKDWIRFDQSNILCS. C108 and C186 form a disulfide bridge. The helical transmembrane segment at 110–131 threads the bilayer; sequence IFGISMVFSGLCPLFLGSAMAI. The Cytoplasmic portion of the chain corresponds to 132-152; that stretch reads ERCIGVTNPIFHSTKITSKHV. A helical membrane pass occupies residues 153–175; it reads KMILSGVCMFAVFVAVLPILGHR. Topologically, residues 176-198 are extracellular; it reads DYQIQASRTWCFYNTEHIEDWED. Residues 199-224 traverse the membrane as a helical segment; that stretch reads RFYLLFFSFLGLLALGVSFSCNAVTG. Topologically, residues 225 to 250 are cytoplasmic; the sequence is VTLLRVKFRSQQHRQGRSHHLEMIIQ. A helical membrane pass occupies residues 251–267; the sequence is LLAIMCVSCVCWSPFLV. Topologically, residues 268–285 are extracellular; it reads TMANIAINGNNSPVTCET. Residues 286 to 307 traverse the membrane as a helical segment; sequence TLFALRMATWNQILDPWVYILL. Over 308–366 the chain is Cytoplasmic; sequence RKAVLRNLYKLASRCCGVNIISLHIWELSSIKNSLKVAAISESPAAEKESQQASSEAGL.

The protein belongs to the G-protein coupled receptor 1 family.

The protein localises to the cell membrane. Functionally, receptor for prostaglandin F2-alpha (PGF2-alpha). The activity of this receptor is mediated by G proteins which activate a phosphatidylinositol-calcium second messenger system. Initiates luteolysis in the corpus luteum. In Mus musculus (Mouse), this protein is Prostaglandin F2-alpha receptor (Ptgfr).